The following is a 147-amino-acid chain: NAD(P)H-quinone oxidoreductase subunit N (147 aa).

Belongs to the complex I NdhN subunit family. In terms of assembly, NDH-1 can be composed of about 15 different subunits; different subcomplexes with different compositions have been identified which probably have different functions.

The protein resides in the cellular thylakoid membrane. The catalysed reaction is a plastoquinone + NADH + (n+1) H(+)(in) = a plastoquinol + NAD(+) + n H(+)(out). It catalyses the reaction a plastoquinone + NADPH + (n+1) H(+)(in) = a plastoquinol + NADP(+) + n H(+)(out). Functionally, NDH-1 shuttles electrons from an unknown electron donor, via FMN and iron-sulfur (Fe-S) centers, to quinones in the respiratory and/or the photosynthetic chain. The immediate electron acceptor for the enzyme in this species is believed to be plastoquinone. Couples the redox reaction to proton translocation, and thus conserves the redox energy in a proton gradient. Cyanobacterial NDH-1 also plays a role in inorganic carbon-concentration. This chain is NAD(P)H-quinone oxidoreductase subunit N, found in Synechococcus sp. (strain JA-2-3B'a(2-13)) (Cyanobacteria bacterium Yellowstone B-Prime).